We begin with the raw amino-acid sequence, 193 residues long: Segregation and condensation protein B (193 aa).

This sequence belongs to the ScpB family. Homodimer. Homodimerization may be required to stabilize the binding of ScpA to the Smc head domains. Component of a cohesin-like complex composed of ScpA, ScpB and the Smc homodimer, in which ScpA and ScpB bind to the head domain of Smc. The presence of the three proteins is required for the association of the complex with DNA.

The protein localises to the cytoplasm. Its function is as follows. Participates in chromosomal partition during cell division. May act via the formation of a condensin-like complex containing Smc and ScpA that pull DNA away from mid-cell into both cell halves. The protein is Segregation and condensation protein B of Clostridium botulinum (strain ATCC 19397 / Type A).